The chain runs to 130 residues: UPF0102 protein AHA_3896 (130 aa).

The protein belongs to the UPF0102 family.

The chain is UPF0102 protein AHA_3896 from Aeromonas hydrophila subsp. hydrophila (strain ATCC 7966 / DSM 30187 / BCRC 13018 / CCUG 14551 / JCM 1027 / KCTC 2358 / NCIMB 9240 / NCTC 8049).